We begin with the raw amino-acid sequence, 130 residues long: Zinc finger A20 and AN1 domain-containing stress-associated protein 10 (130 aa).

The A20-type zinc-finger motif lies at 4–38 (ETEALPCEGGCGLYGTRVNNNLCSLCYKKSVLQHS). Zn(2+)-binding residues include Cys10, Cys14, Cys26, Cys29, Cys71, Cys74, Cys85, Cys87, Cys92, His95, His101, and Cys103. Residues 65 to 111 (PVKKRRCGICKRKVGMLGFKCRCGHMFCGSHRYPEEHSCPFDYKQSG) form an AN1-type zinc finger.

In terms of biological role, may be involved in environmental stress response. The protein is Zinc finger A20 and AN1 domain-containing stress-associated protein 10 (SAP10) of Arabidopsis thaliana (Mouse-ear cress).